Consider the following 130-residue polypeptide: Small ribosomal subunit protein uS8 (130 aa).

Belongs to the universal ribosomal protein uS8 family. In terms of assembly, part of the 30S ribosomal subunit.

Its function is as follows. One of the primary rRNA binding proteins, it binds directly to 16S rRNA central domain where it helps coordinate assembly of the platform of the 30S subunit. This chain is Small ribosomal subunit protein uS8 (rps8), found in Methanocaldococcus jannaschii (strain ATCC 43067 / DSM 2661 / JAL-1 / JCM 10045 / NBRC 100440) (Methanococcus jannaschii).